The following is a 635-amino-acid chain: Nuclear distribution protein nudE homolog 1 (635 aa).

Residues 14–192 are a coiled coil; it reads EKEIKHWKSK…TILRDLVTRS (179 aa). Disordered regions lie at residues 35 to 63, 200 to 267, 279 to 328, 389 to 504, and 516 to 635; these read ESSLQDFVESSKELEQEMEKELSASNKTI, TMAS…LSRD, VLDD…SARA, SRVV…DHDP, and AAQA…TETF. Over residues 43–56 the composition is skewed to basic and acidic residues; the sequence is ESSKELEQEMEKEL. Polar residues-rich tracts occupy residues 201–224 and 237–246; these read MASSTYDDSTAPRSEQSFDSSPIK and SRQALSSPVT. The span at 280 to 299 shows a compositional bias: low complexity; the sequence is LDDSPTATTTSAAPTRSSTL. 2 stretches are compositionally biased toward polar residues: residues 314-326 and 411-428; these read ASTSHGLTSSPSA and GSPSANGHNSIHMPTSTP. Over residues 516-541 the composition is skewed to low complexity; that stretch reads AAQASVAKRRTSMSGSGMSHSASHGS. Composition is skewed to polar residues over residues 547–571 and 580–619; these read SGSTLPRSTTPSTVAAPRVTQSSMT and SKRTPLSTRLASSHRNASSARGSINGPPSSWKTSAMPAQT. Residues 620 to 635 show a composition bias toward low complexity; it reads LSRSRSSSLGSETETF.

Belongs to the nudE family. As to quaternary structure, self-associates. Interacts with PAC1.

The protein resides in the cytoplasm. Its subcellular location is the cytoskeleton. Required for nuclear migration. In Mycosarcoma maydis (Corn smut fungus), this protein is Nuclear distribution protein nudE homolog 1 (NDE1).